A 102-amino-acid chain; its full sequence is Small ribosomal subunit protein uS10 (102 aa).

This sequence belongs to the universal ribosomal protein uS10 family. Part of the 30S ribosomal subunit.

In terms of biological role, involved in the binding of tRNA to the ribosomes. The protein is Small ribosomal subunit protein uS10 of Mycoplasma mobile (strain ATCC 43663 / 163K / NCTC 11711) (Mesomycoplasma mobile).